A 297-amino-acid polypeptide reads, in one-letter code: Bifunctional protein FolD 2 (297 aa).

NADP(+)-binding positions include 164–166, serine 193, and isoleucine 234; that span reads GRS.

The protein belongs to the tetrahydrofolate dehydrogenase/cyclohydrolase family. As to quaternary structure, homodimer.

It carries out the reaction (6R)-5,10-methylene-5,6,7,8-tetrahydrofolate + NADP(+) = (6R)-5,10-methenyltetrahydrofolate + NADPH. The catalysed reaction is (6R)-5,10-methenyltetrahydrofolate + H2O = (6R)-10-formyltetrahydrofolate + H(+). The protein operates within one-carbon metabolism; tetrahydrofolate interconversion. Its function is as follows. Catalyzes the oxidation of 5,10-methylenetetrahydrofolate to 5,10-methenyltetrahydrofolate and then the hydrolysis of 5,10-methenyltetrahydrofolate to 10-formyltetrahydrofolate. This chain is Bifunctional protein FolD 2, found in Haloarcula marismortui (strain ATCC 43049 / DSM 3752 / JCM 8966 / VKM B-1809) (Halobacterium marismortui).